Consider the following 193-residue polypeptide: NADH-quinone oxidoreductase subunit B (193 aa).

Residues Cys72, Cys73, Cys137, and Cys167 each coordinate [4Fe-4S] cluster.

This sequence belongs to the complex I 20 kDa subunit family. As to quaternary structure, NDH-1 is composed of 14 different subunits. Subunits NuoB, C, D, E, F, and G constitute the peripheral sector of the complex. [4Fe-4S] cluster is required as a cofactor.

Its subcellular location is the cell inner membrane. The enzyme catalyses a quinone + NADH + 5 H(+)(in) = a quinol + NAD(+) + 4 H(+)(out). Functionally, NDH-1 shuttles electrons from NADH, via FMN and iron-sulfur (Fe-S) centers, to quinones in the respiratory chain. The immediate electron acceptor for the enzyme in this species is believed to be ubiquinone. Couples the redox reaction to proton translocation (for every two electrons transferred, four hydrogen ions are translocated across the cytoplasmic membrane), and thus conserves the redox energy in a proton gradient. The polypeptide is NADH-quinone oxidoreductase subunit B (Bartonella henselae (strain ATCC 49882 / DSM 28221 / CCUG 30454 / Houston 1) (Rochalimaea henselae)).